The following is a 219-amino-acid chain: MSGWSGPLARRGPGPLALLFLFLLGPSSVLAISFHLPVNSRKCLREEIHKDLLVTGAYEITDQSGGAGGLRTHLKITDSAGHILYSKEDASKGKFAFTTEDYDMFEVCFESKGTGRIPDQLVILDMKHGVEAKNYEEIAKVEKLKPLEVELRRLEDLSESIVNDFAYMKKREEEMRDTNESTNTRVLYFSIFSMFCLIGLATWQVFYLRRFFKAKKLIE.

Residues 1–31 (MSGWSGPLARRGPGPLALLFLFLLGPSSVLA) form the signal peptide. Positions 1–142 (MSGWSGPLAR…KNYEEIAKVE (142 aa)) are required for interaction with STX17. Residues 32–185 (ISFHLPVNSR…RDTNESTNTR (154 aa)) lie on the Lumenal side of the membrane. The 153-residue stretch at 41–193 (RKCLREEIHK…TRVLYFSIFS (153 aa)) folds into the GOLD domain. Positions 147-178 (LEVELRRLEDLSESIVNDFAYMKKREEEMRDT) are required for TMED10 and TMED2 cis-Golgi network localization. Dimethylated arginine occurs at positions 171 and 176. N179 carries N-linked (GlcNAc...) asparagine glycosylation. Residues 186 to 206 (VLYFSIFSMFCLIGLATWQVF) form a helical membrane-spanning segment. Positions 204 to 219 (QVFYLRRFFKAKKLIE) are interaction with COPG1. The Cytoplasmic portion of the chain corresponds to 207–219 (YLRRFFKAKKLIE). The tract at residues 207–219 (YLRRFFKAKKLIE) is interaction with ARF1 and IL1B. Positions 211–212 (FF) match the COPII vesicle coat-binding motif. The short motif at 211–219 (FFKAKKLIE) is the COPI vesicle coat-binding element.

The protein belongs to the EMP24/GP25L family. Predominantly dimeric and to a lesser extent monomeric in the ER. Monomer and dimer in ERGIC and cis-Golgi network. Forms homooligomer (via GOLD domain); the assembly is promoted by direct binding with leaderless cargos and may form a protein channel that facilitates cargo entry into the ERGIC. Forms heterooligomeric complexes with other members of the p24 family such as TMED2, TMED7 and TMED9. Interacts (via GOLD domain) with TMED2 (via GOLD domain); the complex is required for export of TMED10 from the ER to the cis-Golgi network; the complex is proposed to be involved in cis-Golgi network dynamics and / or biogenesis. Associates with the COPI vesicle coat subunits (coatomer). Tetramerization of the cytoplasmic domain at the Golgi membrane in vitro; the complex is proposed to interact with COPI coatomer and induce budding of the vesicles. Interacts with COPG1; the interaction involves TMED10 homodimer. Interacts with ARF1 (GDP-bound); the interaction probably involves a TMED10 oligomer. Interacts with SEC23A, SEC24B, SEC24C and SEC24D components of the coat protein complex II/COPII, indicative of an association of TMED10 with the COPII vesicle coat. Interacts with CD59. Interacts with MPPE1/PGAP5; the complex might recruit and sort GPI-anchored proteins to the ER-exit site, or the interaction might lead to recycling of PGAP5 between the ER and the Golgi. Interacts with F2LR1/PAR2. Interacts with KDELR2/ERD2; the interaction is disrupted by KDELR2 ligand. Found in a complex composed at least of SURF4, TMED2 and TMED10. Associates with the presenilin-dependent gamma-secretase complex. Interacts with STX17; the interaction is direct. Interacts with IL-1; the interaction is direct. Interacts with RAB21 (active GTP-bound form); the interaction is indirect and regulates TMED10 abundance and localization at the Golgi.

It localises to the endoplasmic reticulum membrane. The protein resides in the endoplasmic reticulum-Golgi intermediate compartment membrane. Its subcellular location is the golgi apparatus membrane. It is found in the golgi apparatus. The protein localises to the cis-Golgi network membrane. It localises to the trans-Golgi network membrane. The protein resides in the cytoplasmic vesicle. Its subcellular location is the secretory vesicle membrane. It is found in the cell membrane. The protein localises to the melanosome. Its function is as follows. Cargo receptor involved in protein vesicular trafficking and quality control in the endoplasmic reticulum (ER) and Golgi. The p24 protein family is a group of transmembrane proteins that bind coat protein complex I/COPI and coat protein complex II/COPII involved in vesicular trafficking between the membranes. Acts at the lumenal side for incorporation of secretory cargo molecules into transport vesicles and involved in vesicle coat formation at the cytoplasmic side. Mainly functions in the early secretory pathway and cycles between the ER, ER-Golgi intermediate compartment (ERGIC) and Golgi, mediating cargo transport through COPI and COPII-coated vesicles. In COPII vesicle-mediated anterograde transport, involved in the transport of GPI-anchored proteins by acting together with TMED2 as their cargo receptor; the function specifically implies SEC24C and SEC24D of the COPII vesicle coat and lipid raft-like microdomains of the ER. Recognizes GPI anchors structural remodeled in the ER by the GPI inositol-deacylase/PGAP1 and the metallophosphoesterase MPPE1/PGAP5. In COPI vesicle-mediated retrograde transport, involved in the biogenesis of COPI vesicles and vesicle coat recruitment. Involved in trafficking of amyloid beta A4 protein and soluble APP-beta release (independent from the modulation of gamma-secretase activity). Involved in the KDELR2-mediated retrograde transport of the toxin A subunit (CTX-A-K63)together with COPI and the COOH terminus of KDELR2. On Golgi membranes, acts as a primary receptor for ARF1-GDP, a GTP-binding protein involved in COPI-vesicle formation. Increases coatomer-dependent GTPase-activating activity of ARFGAP2 which mediates the hydrolysis of ARF1-bound GTP and therefore modulates protein trafficking from the Golgi apparatus. Involved in the exocytic trafficking of G protein-coupled receptors F2LR1/PAR2 (trypsin and tryspin-like enzyme receptor), OPRM1 (opioid receptor) and P2RY4 (UTD and UDP receptor) from the Golgi to the plasma membrane, thus contributing to receptor resensitization. In addition to its cargo receptor activity, may also act as a protein channel after oligomerization, facilitating the post-translational entry of leaderless cytoplasmic cargo into the ERGIC. Involved in the translocation into ERGIC, the vesicle entry and the secretion of leaderless cargos (lacking the secretion signal sequence), including the mature form of interleukin 1/IL-1 family members, the alpha-crystallin B chain HSPB5, the carbohydrate-binding proteins galectin-1/LGALS1 and galectin-3/LGALS3, the microtubule-associated protein Tau/MAPT, and the annexin A1/ANXA1; the translocation process is dependent on cargo protein unfolding and enhanced by chaperones HSP90AB1 and HSP90B1/GRP9. Could also associates with the presenilin-dependent gamma-secretase complex in order to regulate gamma-cleavages of the amyloid beta A4 protein to yield amyloid-beta 40/Abeta40. This is Transmembrane emp24 domain-containing protein 10 (TMED10) from Oryctolagus cuniculus (Rabbit).